The sequence spans 319 residues: Vomeronasal type-1 receptor 96 (319 aa).

Topologically, residues 1 to 19 (MNKVNILPSDTNIKITLFS) are extracellular. The chain crosses the membrane as a helical span at residues 20–40 (EVSVGISANSVLFFAHLCMFF). The Cytoplasmic portion of the chain corresponds to 41-49 (EENRSKPID). A helical membrane pass occupies residues 50 to 70 (LCIAFLSLTQLMLLVTMGLIA). At 71-93 (ADMFMSQGIWDSTTCRSIIYFHR) the chain is on the extracellular side. Cysteine 85 and cysteine 172 form a disulfide bridge. Residues 94-114 (LLRGFNLCAACLLHILWTFTL) traverse the membrane as a helical segment. At 115–134 (SPRSSCLTKFKHKSPHHISC) the chain is on the cytoplasmic side. A helical transmembrane segment spans residues 135–155 (AFFSLCVLYMLFSSHLFVLII). Topologically, residues 156–193 (ATSNLTSDHFMYVTQSCSILPMSYSRTTMFSLVMVTRE) are extracellular. An N-linked (GlcNAc...) asparagine glycan is attached at asparagine 159. Residues 194–214 (AFLISLMALFSGYMVTLLWRH) traverse the membrane as a helical segment. Residues 215–238 (KKQVQHLHSTSLSSKSSPQQRATR) are Cytoplasmic-facing. Residues 239–259 (TILLLMSFFVVLYILDIVIFQ) traverse the membrane as a helical segment. The Extracellular segment spans residues 260–269 (SRTKFKDGSM). A helical membrane pass occupies residues 270-290 (FYSLHIIVSHSYATISPFVFI). Topologically, residues 291–319 (FSDKRIIKFLGSMSGRIINICLFSDGYGP) are cytoplasmic.

The protein belongs to the G-protein coupled receptor 1 family.

Its subcellular location is the cell membrane. Its function is as follows. Putative pheromone receptor implicated in the regulation of social as well as reproductive behavior. The chain is Vomeronasal type-1 receptor 96 (Vom1r96) from Rattus norvegicus (Rat).